Reading from the N-terminus, the 414-residue chain is Serine hydroxymethyltransferase (414 aa).

(6S)-5,6,7,8-tetrahydrofolate-binding positions include Leu-116 and Gly-120–Leu-122. The residue at position 224 (Lys-224) is an N6-(pyridoxal phosphate)lysine. (6S)-5,6,7,8-tetrahydrofolate is bound at residue Ser-348–Phe-350.

The protein belongs to the SHMT family. In terms of assembly, homodimer. The cofactor is pyridoxal 5'-phosphate.

It is found in the cytoplasm. The catalysed reaction is (6R)-5,10-methylene-5,6,7,8-tetrahydrofolate + glycine + H2O = (6S)-5,6,7,8-tetrahydrofolate + L-serine. Its pathway is one-carbon metabolism; tetrahydrofolate interconversion. It participates in amino-acid biosynthesis; glycine biosynthesis; glycine from L-serine: step 1/1. Its function is as follows. Catalyzes the reversible interconversion of serine and glycine with tetrahydrofolate (THF) serving as the one-carbon carrier. This reaction serves as the major source of one-carbon groups required for the biosynthesis of purines, thymidylate, methionine, and other important biomolecules. Also exhibits THF-independent aldolase activity toward beta-hydroxyamino acids, producing glycine and aldehydes, via a retro-aldol mechanism. The sequence is that of Serine hydroxymethyltransferase from Campylobacter jejuni subsp. doylei (strain ATCC BAA-1458 / RM4099 / 269.97).